A 235-amino-acid polypeptide reads, in one-letter code: MTDGNQKPDGNSGEQVTVTDKRRIDPETGEVRHVPPGDMPGGTAAADAAHTEDKVAELTADLQRVQADFANYRKRALRDQQAAADRAKASVVSQLLGVLDDLERARKHGDLESGPLKSVADKLDSALTGLGLVAFGAEGEDFDPVLHEAVQHEGDGGQGSKPVIGTVMRQGYQLGEQVLRHALVGVVDTVVVDAAELESVDDGTAVADTAENDQADQGNSADTSGEQAESEPSGS.

Polar residues predominate over residues 1 to 18 (MTDGNQKPDGNSGEQVTV). Disordered regions lie at residues 1–50 (MTDG…DAAH) and 198–235 (ESVDDGTAVADTAENDQADQGNSADTSGEQAESEPSGS). Residues 19–35 (TDKRRIDPETGEVRHVP) show a composition bias toward basic and acidic residues. A compositionally biased stretch (polar residues) spans 215–235 (ADQGNSADTSGEQAESEPSGS).

It belongs to the GrpE family. As to quaternary structure, homodimer.

The protein localises to the cytoplasm. Its function is as follows. Participates actively in the response to hyperosmotic and heat shock by preventing the aggregation of stress-denatured proteins, in association with DnaK and GrpE. It is the nucleotide exchange factor for DnaK and may function as a thermosensor. Unfolded proteins bind initially to DnaJ; upon interaction with the DnaJ-bound protein, DnaK hydrolyzes its bound ATP, resulting in the formation of a stable complex. GrpE releases ADP from DnaK; ATP binding to DnaK triggers the release of the substrate protein, thus completing the reaction cycle. Several rounds of ATP-dependent interactions between DnaJ, DnaK and GrpE are required for fully efficient folding. The polypeptide is Protein GrpE (Mycobacterium tuberculosis (strain ATCC 25177 / H37Ra)).